The primary structure comprises 148 residues: UPF0756 membrane protein CKO_01811 (148 aa).

The next 4 helical transmembrane spans lie at 14–34 (ALGFISHNTTVAVSILVLIIV), 51–71 (LTVGIIILTIGVMAPIASGSL), 86–106 (LVAIAIGVFVSWLGGRGVTLM), and 121–141 (VLGVALFRGVPVGPLIAAGLV).

It belongs to the UPF0756 family.

It is found in the cell membrane. This Citrobacter koseri (strain ATCC BAA-895 / CDC 4225-83 / SGSC4696) protein is UPF0756 membrane protein CKO_01811.